Consider the following 321-residue polypeptide: G-protein coupled receptor aex-2 (321 aa).

The Extracellular portion of the chain corresponds to 1 to 24; the sequence is MNSTDIIANVTKPFVENLTLGETA. 3 N-linked (GlcNAc...) asparagine glycosylation sites follow: Asn2, Asn9, and Asn17. Residues 25–45 traverse the membrane as a helical segment; that stretch reads FYISCGIVGTVFNALVLWIAL. At 46–55 the chain is on the cytoplasmic side; it reads TYINTEDKPR. The chain crosses the membrane as a helical span at residues 56 to 76; that stretch reads QIIVINMTVADLLMCIVYMKT. Over 77 to 90 the chain is Extracellular; it reads RPWLSHFNLWLCHP. A disulfide bridge connects residues Cys88 and Cys161. The helical transmembrane segment at 91-111 threads the bilayer; sequence YYVIIWTCQMCSCLNLVWLNV. Residues 112–132 lie on the Cytoplasmic side of the membrane; sequence DKLIYIQFPLHYYQIVNRKRL. A helical transmembrane segment spans residues 133–153; that stretch reads LWITAATWGGLYAMNIALVTF. Over 154 to 175 the chain is Extracellular; that stretch reads LKITRGSCLGVSLNPYVYLLSP. Residues 176 to 196 traverse the membrane as a helical segment; that stretch reads IFYVVMILTSFSLSALIYCIA. The Cytoplasmic portion of the chain corresponds to 197 to 221; that stretch reads HNLTHMEERQRSKLFRRLFFLFSST. The chain crosses the membrane as a helical span at residues 222–242; the sequence is LWTFFTCLPYRLLYLFSIFCG. Residues 243 to 254 are Extracellular-facing; it reads ETCQINNYYKTA. Residues 255 to 275 traverse the membrane as a helical segment; it reads TNLFFRLLIVGIMINPVITIW. Over 276 to 321 the chain is Cytoplasmic; sequence TQRIYRLRLMRMFGRLRENSSTEVLMVSNRRASERPPEHTPLRCDM.

Belongs to the G-protein coupled receptor 1 family. In terms of tissue distribution, expressed in the intestinal muscle, anal depressor, AVL and DVB GABAergic neurons, enteric muscles, the nerve ring, the ventral nerve cord and head mesodermal cells.

The protein resides in the cell membrane. Its subcellular location is the cell projection. The protein localises to the cilium. Its function is as follows. G-protein coupled receptor for the nlp-40 neuropeptide. The activity of this receptor is mediated by G proteins which activate adenylyl cyclase. Plays a role in the defecation motor program, which is a coordinated series of three muscle contractions that occurs every 45 seconds. Specifically, acts in GABAergic neurons, such as AVL and DVB, to control the expulsion step of defecation. Required for fatty acid uptake and metabolism by intestinal cells and therefore regulates the levels of triglycerides in the intestine. In Caenorhabditis elegans, this protein is G-protein coupled receptor aex-2.